Here is a 280-residue protein sequence, read N- to C-terminus: L-proline cis-4-hydroxylase (280 aa).

Fe cation contacts are provided by H106, D108, and H154. R164 is a binding site for 2-oxoglutarate.

It belongs to the L-proline cis-4-/cis-3-hydroxylase family. The cofactor is Fe(2+).

It carries out the reaction L-proline + 2-oxoglutarate + O2 = cis-4-hydroxy-L-proline + succinate + CO2. With respect to regulation, inhibited by metal ions such as Co(2+), Zn(2+), Cu(2+) or Ni(2+). Is also inhibited by EDTA or diethylpyrocarbonate (DEPC) in vitro. Unlike the procollagen-proline cis-3- and trans-4-hydroxylases from mammals, does not necessarily require L-ascorbate for activity although it does increase the activity of the enzyme. Dioxygenase that catalyzes the 2-oxoglutarate-dependent selective hydroxylation of free L-proline to cis-4-hydroxy-L-proline (cis-4-Hyp). The polypeptide is L-proline cis-4-hydroxylase (Mesorhizobium japonicum (strain LMG 29417 / CECT 9101 / MAFF 303099) (Mesorhizobium loti (strain MAFF 303099))).